Reading from the N-terminus, the 89-residue chain is Small ribosomal subunit protein uS15 (89 aa).

The protein belongs to the universal ribosomal protein uS15 family. In terms of assembly, part of the 30S ribosomal subunit. Forms a bridge to the 50S subunit in the 70S ribosome, contacting the 23S rRNA.

Functionally, one of the primary rRNA binding proteins, it binds directly to 16S rRNA where it helps nucleate assembly of the platform of the 30S subunit by binding and bridging several RNA helices of the 16S rRNA. Its function is as follows. Forms an intersubunit bridge (bridge B4) with the 23S rRNA of the 50S subunit in the ribosome. The polypeptide is Small ribosomal subunit protein uS15 (Bartonella henselae (strain ATCC 49882 / DSM 28221 / CCUG 30454 / Houston 1) (Rochalimaea henselae)).